The chain runs to 309 residues: NADH-quinone oxidoreductase subunit C (309 aa).

The disordered stretch occupies residues 198–309 (LPGDEKAVPP…RTRKKKEDGE (112 aa)). The segment covering 220–230 (TKGDAKADVPK) has biased composition (basic and acidic residues). The span at 246 to 261 (DAAAKPVAEAAAPAAT) shows a compositional bias: low complexity.

This sequence belongs to the complex I 30 kDa subunit family. In terms of assembly, NDH-1 is composed of 14 different subunits. Subunits NuoB, C, D, E, F, and G constitute the peripheral sector of the complex.

It localises to the cell inner membrane. The catalysed reaction is a quinone + NADH + 5 H(+)(in) = a quinol + NAD(+) + 4 H(+)(out). Functionally, NDH-1 shuttles electrons from NADH, via FMN and iron-sulfur (Fe-S) centers, to quinones in the respiratory chain. The immediate electron acceptor for the enzyme in this species is believed to be ubiquinone. Couples the redox reaction to proton translocation (for every two electrons transferred, four hydrogen ions are translocated across the cytoplasmic membrane), and thus conserves the redox energy in a proton gradient. The sequence is that of NADH-quinone oxidoreductase subunit C from Novosphingobium aromaticivorans (strain ATCC 700278 / DSM 12444 / CCUG 56034 / CIP 105152 / NBRC 16084 / F199).